A 254-amino-acid polypeptide reads, in one-letter code: Vesicle transport protein USE1 (254 aa).

The Cytoplasmic segment spans residues 1–228; that stretch reads MAYISENELK…AYKCGYDCFK (228 aa). The chain crosses the membrane as a helical; Anchor for type IV membrane protein span at residues 229 to 249; the sequence is VMLIVLIFMSFVSMVLMMKIF. The Lumenal segment spans residues 250–254; that stretch reads KKAST.

It belongs to the USE1 family.

Its subcellular location is the endoplasmic reticulum membrane. Functionally, SNARE that may be involved in targeting and fusion of Golgi-derived retrograde transport vesicles with the ER. The chain is Vesicle transport protein USE1 from Caenorhabditis elegans.